The primary structure comprises 111 residues: Small ribosomal subunit protein bS16 (111 aa).

Residues Met-92 to Ala-111 are disordered.

The protein belongs to the bacterial ribosomal protein bS16 family.

The polypeptide is Small ribosomal subunit protein bS16 (Rickettsia akari (strain Hartford)).